A 367-amino-acid chain; its full sequence is Glutamate 5-kinase (367 aa).

An ATP-binding site is contributed by K17. 3 residues coordinate substrate: S57, D144, and N156. ATP contacts are provided by residues 176-177 (SD) and 217-223 (TGGMTSK). The 79-residue stretch at 279-357 (AGALTLDEGA…SELPGELRRP (79 aa)) folds into the PUA domain.

The protein belongs to the glutamate 5-kinase family.

It localises to the cytoplasm. The enzyme catalyses L-glutamate + ATP = L-glutamyl 5-phosphate + ADP. It participates in amino-acid biosynthesis; L-proline biosynthesis; L-glutamate 5-semialdehyde from L-glutamate: step 1/2. Functionally, catalyzes the transfer of a phosphate group to glutamate to form L-glutamate 5-phosphate. In Mycobacterium avium (strain 104), this protein is Glutamate 5-kinase.